A 352-amino-acid chain; its full sequence is Protein-glutamate methylesterase/protein-glutamine glutaminase (352 aa).

The region spanning 5–122 (RAIVIDDSAF…SLDIRNVEDE (118 aa)) is the Response regulatory domain. The residue at position 56 (aspartate 56) is a 4-aspartylphosphate. Residues 163–352 (RSIVSIGTST…IPSLIVKQLT (190 aa)) enclose the CheB-type methylesterase domain. Active-site residues include serine 171, histidine 198, and aspartate 294.

It belongs to the CheB family. Post-translationally, phosphorylated by CheA. Phosphorylation of the N-terminal regulatory domain activates the methylesterase activity.

Its subcellular location is the cytoplasm. The catalysed reaction is [protein]-L-glutamate 5-O-methyl ester + H2O = L-glutamyl-[protein] + methanol + H(+). It catalyses the reaction L-glutaminyl-[protein] + H2O = L-glutamyl-[protein] + NH4(+). In terms of biological role, involved in chemotaxis. Part of a chemotaxis signal transduction system that modulates chemotaxis in response to various stimuli. Catalyzes the demethylation of specific methylglutamate residues introduced into the chemoreceptors (methyl-accepting chemotaxis proteins or MCP) by CheR. Also mediates the irreversible deamidation of specific glutamine residues to glutamic acid. The protein is Protein-glutamate methylesterase/protein-glutamine glutaminase of Oceanobacillus iheyensis (strain DSM 14371 / CIP 107618 / JCM 11309 / KCTC 3954 / HTE831).